The chain runs to 147 residues: Myoglobin (147 aa).

Residues 2–137 (ADFEMVLKHW…VMTTIIADIE (136 aa)) enclose the Globin domain. Residue His-60 participates in nitrite binding. Residue His-60 coordinates O2. His-89 provides a ligand contact to heme b.

Belongs to the globin family. As to quaternary structure, monomeric.

The protein resides in the cytoplasm. Its subcellular location is the sarcoplasm. It catalyses the reaction Fe(III)-heme b-[protein] + nitric oxide + H2O = Fe(II)-heme b-[protein] + nitrite + 2 H(+). The catalysed reaction is H2O2 + AH2 = A + 2 H2O. In terms of biological role, monomeric heme protein which primary function is to store oxygen and facilitate its diffusion within muscle tissues. Reversibly binds oxygen through a pentacoordinated heme iron and enables its timely and efficient release as needed during periods of heightened demand. Depending on the oxidative conditions of tissues and cells, and in addition to its ability to bind oxygen, it also has a nitrite reductase activity whereby it regulates the production of bioactive nitric oxide. Under stress conditions, like hypoxia and anoxia, it also protects cells against reactive oxygen species thanks to its pseudoperoxidase activity. The chain is Myoglobin (mb) from Makaira nigricans (Atlantic blue marlin).